We begin with the raw amino-acid sequence, 5233 residues long: E3 ubiquitin-protein ligase highwire (5233 aa).

Positions 197–230 are disordered; it reads VVGGPGLPAEKRPRRDSANSDADSDTEEPTEREP. Basic and acidic residues predominate over residues 205–214; sequence AEKRPRRDSA. A phosphoserine mark is found at Ser213 and Ser216. 3 RCC1 repeats span residues 615–666, 669–724, and 768–818; these read NGRV…ALLV, DGTV…FVTK, and KGQL…DKRL. Positions 680-700 are disordered; that stretch reads RGEDGDSSKNRRQPKAVKPKK. Over residues 689 to 700 the composition is skewed to basic residues; sequence NRRQPKAVKPKK. Residues 900–950 form a disordered region; it reads TELKPPPSDVQQRQQRSKTLIMRRKERKGELETGAAGGGAATPTDLDKDPP. Residues 908-917 show a composition bias toward polar residues; it reads DVQQRQQRSK. RCC1 repeat units follow at residues 931–983, 984–1033, and 1035–1084; these read ETGA…VLTL, AGEV…LLTS, and GMVY…TVAP. Disordered stretches follow at residues 1051–1109 and 1287–1327; these read LPSD…EMPP and AAAA…PPQL. Over residues 1092 to 1103 the composition is skewed to polar residues; the sequence is RSQSPANVQPSG. Residues 1287–1302 show a composition bias toward low complexity; it reads AAAAAVAAPGTPVSAG. The PHR domain 1 stretch occupies residues 1436 to 1587; that stretch reads NRFDNFGGGW…GQIPAILYRL (152 aa). The tract at residues 1681–1718 is disordered; the sequence is SSTSVATGGGSNAAHGSGVVTTAKSVQSKPNKDKNTPR. A compositionally biased stretch (polar residues) spans 1699 to 1709; the sequence is VVTTAKSVQSK. The PHR domain 2 stretch occupies residues 2014–2169; it reads ARFARCDVSR…GQLPCILYYS (156 aa). 2 disordered regions span residues 2329–2353 and 2580–2604; these read SADL…VPIN and NGAG…NTHQ. The span at 2336-2350 shows a compositional bias: low complexity; that stretch reads QSQSVSQSQSQSQSV. Positions 2885–4082 are required for interaction with Rae1; sequence AEVSAPGPNL…FVSSLNPTGG (1198 aa). A Filamin repeat occupies 2906-3000; sequence WGGMAPPPRI…LEEVYRVDVK (95 aa). Disordered regions lie at residues 3005–3024, 3117–3210, 3277–3333, 3348–3378, 3551–3587, and 3901–3936; these read PPPT…SKLR, KGVG…EPEQ, GGQD…ASET, TTTG…PMGP, PRLL…DLGR, and ASLA…APPV. The span at 3176–3191 shows a compositional bias: basic and acidic residues; sequence KHADLAEREAQVQEER. Residues 3192 to 3210 are compositionally biased toward acidic residues; the sequence is EKEEEQVDDEDADDREPEQ. Over residues 3282–3292 the composition is skewed to polar residues; it reads PRGNGNRSQQE. Positions 3348-3371 are enriched in low complexity; sequence TTTGQGEQQSELQLATTSTASSAS. The span at 3917 to 3932 shows a compositional bias: low complexity; it reads QHHQQQQMNLQLQQHQ. In terms of domain architecture, DOC spans 4195–4374; it reads HNQVHSVATG…KHQPHLRLSH (180 aa). 2 disordered regions span residues 4633–4655 and 4680–4702; these read ASTG…GAVL and LRSR…ALPP. Residues 4638-4652 are compositionally biased toward gly residues; it reads SGSGGVSGSSSGNGG. Residues Cys4991, Cys4994, Cys5009, His5011, His5014, Cys5017, Cys5038, Cys5041, Cys5101, and Cys5104 each coordinate Zn(2+). The segment at 4991–5042 adopts an RING-type; atypical zinc-finger fold; it reads CMICFVEALSCAPSIHLECGHVFHYHCCKAVLEKRWSGPRITFGFSLCPICK. Residues 5096–5231 are tandem cysteine domain; the sequence is YAYYVCFKCQ…LGCGVCRNAQ (136 aa). Cys5115 is a catalytic residue. Zn(2+)-binding residues include Cys5130, Cys5133, Cys5142, His5145, Cys5154, Cys5157, and Cys5158. Residue Cys5165 is part of the active site. Residues Cys5172, Cys5175, Cys5193, Cys5207, His5213, Cys5224, and Cys5227 each contribute to the Zn(2+) site.

The protein belongs to the RING-Cys relay (RCR) family. Component of an E3 ubiquitin ligase complex composed of hiw, Rae1 and Fsn. Interacts with Rae1; the interaction with Rae1 may protect hiw from autophagy-mediated degradation. Express throughout the nervous system. Stage 13 embryos show expression in the central nervous system (CNS) at the longitudinal axon tracts around which the synaptic neuropil forms. Expression outside the CNS starts at stage 16 in presynaptic terminals at the periactive zone which surround the active zone. Expression at neuromuscular junctions (NMJ) and in the CNS is also seen in third instar larvae (at protein level).

It is found in the synapse. The protein localises to the cell projection. The protein resides in the axon. The enzyme catalyses [E2 ubiquitin-conjugating enzyme]-S-ubiquitinyl-L-cysteine + [acceptor protein]-L-threonine = [E2 ubiquitin-conjugating enzyme]-L-cysteine + [acceptor protein]-3-O-ubiquitinyl-L-threonine.. It functions in the pathway protein modification; protein ubiquitination. Atypical E3 ubiquitin-protein ligase which specifically mediates ubiquitination of threonine and serine residues on target proteins, instead of ubiquitinating lysine residues. Shows esterification activity towards both threonine and serine, with a preference for threonine, and acts via two essential catalytic cysteine residues that relay ubiquitin to its substrate via thioester intermediates. Required in the presynaptic motoneuron to down-regulate the levels of wnd and restrain synaptic terminal growth at the neuromuscular junction (NMJ) together with Rae1 and Fsn. In Drosophila melanogaster (Fruit fly), this protein is E3 ubiquitin-protein ligase highwire.